The primary structure comprises 480 residues: Siroheme synthase 2 (480 aa).

The segment at 1–202 (MDYLPMFARL…QDWQSAETWL (202 aa)) is precorrin-2 dehydrogenase /sirohydrochlorin ferrochelatase. Residues 22–23 (EV) and 43–44 (PE) each bind NAD(+). Phosphoserine is present on Ser126. The interval 214–480 (GEVVLVGAGP…GCDLKLVNLA (267 aa)) is uroporphyrinogen-III C-methyltransferase. Pro223 serves as a coordination point for S-adenosyl-L-methionine. Asp246 serves as the catalytic Proton acceptor. Lys268 functions as the Proton donor in the catalytic mechanism. S-adenosyl-L-methionine-binding positions include 299–301 (GGD), 329–330 (TA), Met381, and Gly410.

It in the N-terminal section; belongs to the precorrin-2 dehydrogenase / sirohydrochlorin ferrochelatase family. This sequence in the C-terminal section; belongs to the precorrin methyltransferase family.

It catalyses the reaction uroporphyrinogen III + 2 S-adenosyl-L-methionine = precorrin-2 + 2 S-adenosyl-L-homocysteine + H(+). The enzyme catalyses precorrin-2 + NAD(+) = sirohydrochlorin + NADH + 2 H(+). It carries out the reaction siroheme + 2 H(+) = sirohydrochlorin + Fe(2+). The protein operates within cofactor biosynthesis; adenosylcobalamin biosynthesis; precorrin-2 from uroporphyrinogen III: step 1/1. It participates in cofactor biosynthesis; adenosylcobalamin biosynthesis; sirohydrochlorin from precorrin-2: step 1/1. It functions in the pathway porphyrin-containing compound metabolism; siroheme biosynthesis; precorrin-2 from uroporphyrinogen III: step 1/1. Its pathway is porphyrin-containing compound metabolism; siroheme biosynthesis; siroheme from sirohydrochlorin: step 1/1. The protein operates within porphyrin-containing compound metabolism; siroheme biosynthesis; sirohydrochlorin from precorrin-2: step 1/1. Multifunctional enzyme that catalyzes the SAM-dependent methylations of uroporphyrinogen III at position C-2 and C-7 to form precorrin-2 via precorrin-1. Then it catalyzes the NAD-dependent ring dehydrogenation of precorrin-2 to yield sirohydrochlorin. Finally, it catalyzes the ferrochelation of sirohydrochlorin to yield siroheme. The polypeptide is Siroheme synthase 2 (Aeromonas salmonicida (strain A449)).